The sequence spans 281 residues: Digeranylgeranylglyceryl phosphate synthase (281 aa).

Transmembrane regions (helical) follow at residues 7-27, 32-52, 72-91, 95-117, 128-148, 193-213, 214-234, and 258-278; these read ILRP…ALIT, FSVL…NVIN, GRIS…ALAS, FYLG…YYAW, ITIS…LGEV, ISGV…PSLY, LLGI…AVFL, and VGMA…TALT.

This sequence belongs to the UbiA prenyltransferase family. DGGGP synthase subfamily. Mg(2+) is required as a cofactor.

The protein resides in the cell membrane. It carries out the reaction sn-3-O-(geranylgeranyl)glycerol 1-phosphate + (2E,6E,10E)-geranylgeranyl diphosphate = 2,3-bis-O-(geranylgeranyl)-sn-glycerol 1-phosphate + diphosphate. It functions in the pathway membrane lipid metabolism; glycerophospholipid metabolism. Its function is as follows. Prenyltransferase that catalyzes the transfer of the geranylgeranyl moiety of geranylgeranyl diphosphate (GGPP) to the C2 hydroxyl of (S)-3-O-geranylgeranylglyceryl phosphate (GGGP). This reaction is the second ether-bond-formation step in the biosynthesis of archaeal membrane lipids. This chain is Digeranylgeranylglyceryl phosphate synthase, found in Methanothermobacter thermautotrophicus (strain ATCC 29096 / DSM 1053 / JCM 10044 / NBRC 100330 / Delta H) (Methanobacterium thermoautotrophicum).